The sequence spans 422 residues: CinA-like protein (422 aa).

Belongs to the CinA family.

This is CinA-like protein from Mycolicibacterium vanbaalenii (strain DSM 7251 / JCM 13017 / BCRC 16820 / KCTC 9966 / NRRL B-24157 / PYR-1) (Mycobacterium vanbaalenii).